Here is a 369-residue protein sequence, read N- to C-terminus: Forkhead box protein I2-A (369 aa).

Residues 124–218 (RPPYSYSSLI…DNGNFRRKRK (95 aa)) constitute a DNA-binding region (fork-head). Positions 215–252 (RKRKRKSESVGAGFDEDSNEDKKPLALKSLGSDSPQGA) are disordered.

As to expression, localized to the animal hemisphere of early cleavage stage embryos. Zygotic expression is restricted to the dorsal part of the epibranchial placodes of the head within a region located near the tip of the first, second and third visceral pouch.

The protein localises to the nucleus. In terms of biological role, possible transcriptional activator. This Xenopus laevis (African clawed frog) protein is Forkhead box protein I2-A (foxi2-a).